The primary structure comprises 189 residues: Resolvase (189 aa).

Residues 1-139 enclose the Resolvase/invertase-type recombinase catalytic domain; that stretch reads MLVGYARVST…EGLRSAKARG (139 aa). Catalysis depends on S9, which acts as the O-(5'-phospho-DNA)-serine intermediate. Positions 130-151 are disordered; that stretch reads EGLRSAKARGRNGGRPSKRNDK. A DNA-binding region (H-T-H motif) is located at residues 165 to 184; sequence IVDIVKQTELSRATVYRILK.

It belongs to the site-specific recombinase resolvase family.

In terms of biological role, a likely role for the res protein would be to stabilize pCP13 by reducing the number of plasmid multimers resulting from homologous recombination. The sequence is that of Resolvase (res) from Clostridium perfringens (strain 13 / Type A).